Reading from the N-terminus, the 160-residue chain is Small ribosomal subunit protein uS19 (160 aa).

The protein belongs to the universal ribosomal protein uS19 family.

In terms of biological role, protein S19 forms a complex with S13 that binds strongly to the 16S ribosomal RNA. This Pyrobaculum islandicum (strain DSM 4184 / JCM 9189 / GEO3) protein is Small ribosomal subunit protein uS19.